We begin with the raw amino-acid sequence, 430 residues long: DD-carboxypeptidase/endopeptidase Mpg (430 aa).

Zn(2+) is bound by residues His-295, Asp-299, and His-375.

Belongs to the peptidase M23B family. As to quaternary structure, monomer. Zn(2+) serves as cofactor. Likely to be synthesized as a proenzyme. The cleavage of the N-terminal domain is probably required for the activation of the enzyme.

It localises to the cell outer membrane. Its activity is regulated as follows. Peptidoglycan (PG) degradation activity is completely inhibited by zinc chelating EDTA and phenanthroline. In terms of biological role, has both endopeptidase and DD-carboxypeptidase activities. Degrades cell wall peptidoglycan (PG) to allow consummate expression of pili. Degrades N.gonorrhoeae and E.coli PG side chains in vitro. Required for proper piliation, which in turn is required for normal colony morphology, resistance to H(2)O(2) damage and defense against killing by human polymorphonuclear leukocytes (PMNs). Involved in type IV pilus biogenesis. Involved in resistance against non-oxidative killing by adherent CXCL8/IL8-primed human PMNs. Protects from killing by PMN-produced antimicrobial factors, which kill by a mechanism completely independent of reactive oxygen species (ROS) production of the PMNs. Provides protection against oxidative damage caused by peroxides H(2)O(2) and cumene hydroperoxide in vitro. In Neisseria gonorrhoeae (strain ATCC 700825 / FA 1090), this protein is DD-carboxypeptidase/endopeptidase Mpg.